We begin with the raw amino-acid sequence, 283 residues long: MRIFEKAPAKLNLGLDIKGRCDDGYHELAMIMVSIDLNDYVTISELKEDCIVIDSDSSKMPLNNDNDVFKAADIIKNQYGINKGVHIRLEKSIPVCAGLGGGSTDAAATIRALNRLWNLQMDYDEMVAIGFKIGSDVPYCLGGGCSLVLGKGEIVKPLPTLRPCWIVLVKPDFGISTKSIFRDIDCKSISRVDIDLLKSAILSSDYQLMVKSMGNSLEDITITKNPVISTIKERMLNSGADVALMTGSGPTVFSMCSTEKKADRVFNSMKGFCKEVYKVRLLR.

Lys10 is a catalytic residue. 94–104 (PVCAGLGGGST) contributes to the ATP binding site. The active site involves Asp136.

The protein belongs to the GHMP kinase family. IspE subfamily.

The catalysed reaction is 4-CDP-2-C-methyl-D-erythritol + ATP = 4-CDP-2-C-methyl-D-erythritol 2-phosphate + ADP + H(+). Catalyzes the phosphorylation of the position 2 hydroxy group of 4-diphosphocytidyl-2C-methyl-D-erythritol. The polypeptide is Putative 4-diphosphocytidyl-2-C-methyl-D-erythritol kinase (Streptococcus agalactiae serotype III (strain NEM316)).